The following is a 360-amino-acid chain: Peptide chain release factor 1 (360 aa).

Position 235 is an N5-methylglutamine (Gln-235).

This sequence belongs to the prokaryotic/mitochondrial release factor family. Post-translationally, methylated by PrmC. Methylation increases the termination efficiency of RF1.

The protein resides in the cytoplasm. Peptide chain release factor 1 directs the termination of translation in response to the peptide chain termination codons UAG and UAA. The sequence is that of Peptide chain release factor 1 from Mannheimia succiniciproducens (strain KCTC 0769BP / MBEL55E).